We begin with the raw amino-acid sequence, 452 residues long: Protein phosphatase 1F (452 aa).

A PPM-type phosphatase domain is found at 153–410 (LVSIHAIRNT…DNITVMVVFL (258 aa)). The Mn(2+) site is built by Asp-195, Gly-196, Asp-357, and Asp-401. A Phosphoserine modification is found at Ser-452.

Belongs to the PP2C family. In terms of assembly, associates with FEM1B. Mg(2+) serves as cofactor. Requires Mn(2+) as cofactor. In terms of tissue distribution, expressed in the liver.

The catalysed reaction is O-phospho-L-seryl-[protein] + H2O = L-seryl-[protein] + phosphate. The enzyme catalyses O-phospho-L-threonyl-[protein] + H2O = L-threonyl-[protein] + phosphate. In terms of biological role, dephosphorylates and concomitantly deactivates CaM-kinase II activated upon autophosphorylation, and CaM-kinases IV and I activated upon phosphorylation by CaM-kinase kinase. Promotes apoptosis. The chain is Protein phosphatase 1F (Ppm1f) from Mus musculus (Mouse).